Consider the following 174-residue polypeptide: MSLNLDEKKAVVAEVSAQVAKAQAIIIAEYRGLGVGHMTQLRAKARQSGIYFRVLKNSLARRAVSDTPFSGLSEHMVGPLAYGIGSDPVAAAKVLHEFSKGNDKLVIKAGAMANHVISSSEIASLASLPSREELLAKLLGTMQAPVANFVRTLNEVPARFVRGLAAVRDQKESA.

The protein belongs to the universal ribosomal protein uL10 family. Part of the ribosomal stalk of the 50S ribosomal subunit. The N-terminus interacts with L11 and the large rRNA to form the base of the stalk. The C-terminus forms an elongated spine to which L12 dimers bind in a sequential fashion forming a multimeric L10(L12)X complex.

Forms part of the ribosomal stalk, playing a central role in the interaction of the ribosome with GTP-bound translation factors. The protein is Large ribosomal subunit protein uL10 of Nitrosospira multiformis (strain ATCC 25196 / NCIMB 11849 / C 71).